The chain runs to 201 residues: LexA repressor 1 (201 aa).

Positions 28 to 48 form a DNA-binding region, H-T-H motif; that stretch reads LREIAAHLKISGTLGVSKHLE. Residues Ser120 and Lys157 each act as for autocatalytic cleavage activity in the active site.

This sequence belongs to the peptidase S24 family. In terms of assembly, homodimer.

The enzyme catalyses Hydrolysis of Ala-|-Gly bond in repressor LexA.. In terms of biological role, represses a number of genes involved in the response to DNA damage (SOS response), including recA and lexA. In the presence of single-stranded DNA, RecA interacts with LexA causing an autocatalytic cleavage which disrupts the DNA-binding part of LexA, leading to derepression of the SOS regulon and eventually DNA repair. The chain is LexA repressor 1 from Geobacter sulfurreducens (strain ATCC 51573 / DSM 12127 / PCA).